Consider the following 473-residue polypeptide: MSSDNNNDPFDLNEDGHDYFNRVSTTTSPNRQSINSSPKQSSPKSTNNNDDKNNIILDLNDNNNDNNNTNNYNDEDIDVDNKNKFENKDNTYNSNGGSNNKNKNKKKDNKSNNSSDNEEADENTSLISDSEPLLNKKEKDDEQIEIENLDGEDYDDEVSLQDFSSMIVSIIIPVSITMMAVVFFVKYLNNQTLYASTLSYTIAGGSSGGGSGADSITGNSFVDSLIVAGIVLGMIIVTTVAFVLLYKYRCLKILYGWLFLSVGMMLGSFGTTFFQAMLSAANLPLDYITFAFLIFNFTVCGIIGVFWYAHQYVNQLYLVIISVLMAISLTRLPQWTIFTLLVIVAIYDLFAVLCPRGPLKVLVELSQERNENIPALVYETGKGSDSNLKLGLGDFIFYSLLISRAALVHMSCVFSTFIAILTGLFLTLLCLAIFKKALPALPISIFLGILFYYLSNNFLTPFIEALTLSQIFV.

Residues 1–141 (MSSDNNNDPF…PLLNKKEKDD (141 aa)) form a disordered region. Residues 1 to 164 (MSSDNNNDPF…DDEVSLQDFS (164 aa)) are Cytoplasmic-facing. Over residues 22–46 (RVSTTTSPNRQSINSSPKQSSPKST) the composition is skewed to polar residues. A compositionally biased stretch (low complexity) spans 54–72 (NIILDLNDNNNDNNNTNNY). The span at 79–89 (VDNKNKFENKD) shows a compositional bias: basic and acidic residues. The helical transmembrane segment at 165 to 185 (SMIVSIIIPVSITMMAVVFFV) threads the bilayer. The Lumenal segment spans residues 186–224 (KYLNNQTLYASTLSYTIAGGSSGGGSGADSITGNSFVDS). An N-linked (GlcNAc...) asparagine glycan is attached at N190. Residues 225-245 (LIVAGIVLGMIIVTTVAFVLL) form a helical membrane-spanning segment. Residues 246 to 252 (YKYRCLK) are Cytoplasmic-facing. Residues 253–273 (ILYGWLFLSVGMMLGSFGTTF) form a helical membrane-spanning segment. Over 274-286 (FQAMLSAANLPLD) the chain is Lumenal. The helical transmembrane segment at 287–307 (YITFAFLIFNFTVCGIIGVFW) threads the bilayer. Y308 is a topological domain (cytoplasmic). Residues 309–329 (AHQYVNQLYLVIISVLMAISL) traverse the membrane as a helical segment. Topologically, residues 330–334 (TRLPQ) are lumenal. The chain crosses the membrane as a helical span at residues 335-355 (WTIFTLLVIVAIYDLFAVLCP). D348 is an active-site residue. Over 356–389 (RGPLKVLVELSQERNENIPALVYETGKGSDSNLK) the chain is Cytoplasmic. The chain crosses the membrane as a helical span at residues 390–410 (LGLGDFIFYSLLISRAALVHM). D394 is a catalytic residue. Topologically, residues 411-413 (SCV) are lumenal. The helical transmembrane segment at 414–434 (FSTFIAILTGLFLTLLCLAIF) threads the bilayer. At 435–442 (KKALPALP) the chain is on the cytoplasmic side. Residues 439–441 (PAL) carry the PAL motif. The helical intramembrane region spans 443–463 (ISIFLGILFYYLSNNFLTPFI). At 464 to 473 (EALTLSQIFV) the chain is on the cytoplasmic side.

Belongs to the peptidase A22A family. Homodimer. Component of the gamma-secretase complex, a complex composed of a presenilin homodimer, nicastrin, aph1 and pen2.

It localises to the endoplasmic reticulum membrane. The protein resides in the golgi apparatus membrane. Its function is as follows. Probable catalytic subunit of the gamma-secretase complex, an endoprotease complex that catalyzes the intramembrane cleavage of integral membrane proteins such as Notch receptors. Requires the other members of the gamma-secretase complex to have a protease activity. The chain is Presenilin-B (psenB) from Dictyostelium discoideum (Social amoeba).